The sequence spans 261 residues: Antiviral protein S (261 aa).

Disulfide bonds link Cys-34–Cys-258 and Cys-84–Cys-105. Residue Glu-175 is part of the active site.

This sequence belongs to the ribosome-inactivating protein family. Type 1 RIP subfamily.

It carries out the reaction Endohydrolysis of the N-glycosidic bond at one specific adenosine on the 28S rRNA.. In terms of biological role, inhibits viral infection of plants, and protein synthesis in vitro. The protein is Antiviral protein S of Phytolacca americana (American pokeweed).